The following is a 422-amino-acid chain: Exopolygalacturonase clone GBGE184 (422 aa).

Positions 1 to 31 (MANARSLVAKANNINVGSLILMALVFGSCVA) are cleaved as a signal peptide. PbH1 repeat units lie at residues 200–226 (TENV…HLSN), 227–248 (ADNV…SVGR), 250–270 (SNNV…SVGS), 280–301 (VSGI…RIKT), and 310–331 (AVDI…IIDQ). N-linked (GlcNAc...) asparagine glycosylation occurs at Asn229. Asp241 (proton donor) is an active-site residue. Cys243 and Cys260 form a disulfide bridge. Asn252 carries an N-linked (GlcNAc...) asparagine glycan. The active site involves His264. N-linked (GlcNAc...) asparagine glycosylation is present at Asn287. 2 disulfide bridges follow: Cys366–Cys372 and Cys404–Cys420.

It belongs to the glycosyl hydrolase 28 family.

It localises to the secreted. It is found in the cell wall. It carries out the reaction [(1-&gt;4)-alpha-D-galacturonosyl](n) + H2O = alpha-D-galacturonate + [(1-&gt;4)-alpha-D-galacturonosyl](n-1). In terms of biological role, may function in depolymerizing pectin during pollen development, germination, and tube growth. Acts as an exo-polygalacturonase. The protein is Exopolygalacturonase clone GBGE184 (PGA3) of Arabidopsis thaliana (Mouse-ear cress).